Consider the following 514-residue polypeptide: LWamide neuropeptides (514 aa).

The signal sequence occupies residues Met1–Ser22. Basic and acidic residues predominate over residues Val23–Lys53. Positions Val23–Pro75 are excised as a propeptide. The interval Val23–Ala180 is disordered. Tryptophan amide occurs at positions 81 and 90. The propeptide occupies Ser93 to Gly97. A tryptophan amide mark is found at Trp102 and Trp111. Positions Ser114–Gly118 are excised as a propeptide. Residues Trp123 and Trp132 each carry the tryptophan amide modification. Residues Ser135–Gly139 constitute a propeptide that is removed on maturation. Trp144 and Trp153 each carry tryptophan amide. A propeptide spanning residues Ser156 to Gly160 is cleaved from the precursor. Residues Trp165 and Trp174 each carry the tryptophan amide modification. Residues Ser177–Arg181 constitute a propeptide that is removed on maturation. Trp186 bears the Tryptophan amide mark. The propeptide occupies Glu190–Arg199. The residue at position 205 (Trp205) is a Tryptophan amide. Residues Ser208 to Gly212 constitute a propeptide that is removed on maturation. Trp217 is modified (tryptophan amide). Positions Glu221 to Arg230 are excised as a propeptide. Trp236 carries the post-translational modification Tryptophan amide. Positions Ser239–Gly243 are excised as a propeptide. Residues Trp248 and Trp257 each carry the tryptophan amide modification. The interval Gly258–Gly475 is disordered. Positions Ser260–Leu264 are excised as a propeptide. A tryptophan amide mark is found at Trp269 and Trp278. A propeptide spanning residues Ser281–Pro284 is cleaved from the precursor. Residues Trp290 and Trp299 each carry the tryptophan amide modification. Residues Ser302–Pro305 constitute a propeptide that is removed on maturation. Tryptophan amide occurs at positions 311 and 320. Residues Ser323–Pro326 constitute a propeptide that is removed on maturation. Trp332 and Trp341 each carry tryptophan amide. Positions Ser344–Pro347 are excised as a propeptide. Trp353 is modified (tryptophan amide). The propeptide occupies Ser356–Pro366. Tryptophan amide is present on Trp372. Residues Gln376–Pro387 constitute a propeptide that is removed on maturation. Trp393 and Trp402 each carry tryptophan amide. Residues Ser405–Pro408 constitute a propeptide that is removed on maturation. 2 positions are modified to tryptophan amide: Trp414 and Trp423. A propeptide spanning residues Ser426 to Pro429 is cleaved from the precursor. Tryptophan amide occurs at positions 435 and 444. Residues Ser447–Pro450 constitute a propeptide that is removed on maturation. Trp456 and Trp465 each carry tryptophan amide. A propeptide spanning residues Ser468 to Gly472 is cleaved from the precursor. Residues Trp477 and Trp487 each carry the tryptophan amide modification. The disordered stretch occupies residues Arg489 to Gln514. A propeptide spanning residues Ser490–Gln514 is cleaved from the precursor.

This sequence belongs to the LWamide neuropeptide family.

Its subcellular location is the secreted. Its function is as follows. Metamorphosin A may be part of an internal signaling system involved in control of metamorphosis. The polypeptide is LWamide neuropeptides (Anthopleura elegantissima (Green aggregating anemone)).